The sequence spans 1042 residues: Serine/threonine-protein kinase LATS2 (1042 aa).

The interval 23–44 is disordered; it reads REGLKQPSKASTQGLLVGPNSD. Residues 30 to 44 are compositionally biased toward polar residues; that stretch reads SKASTQGLLVGPNSD. Residue S82 is modified to Phosphoserine; by AURKA. Residues 97-138 form the UBA domain; that stretch reads EVNRQMLQELVNAGCDQEMAGRALKQTGSRSIEAALEYISKM. Positions 100-140 are interaction with ubiquitinated AMOTL2; that stretch reads RQMLQELVNAGCDQEMAGRALKQTGSRSIEAALEYISKMGY. Positions 237 to 282 are disordered; sequence HFPGTHYGRGHLLSEQPGYGVQRSSSFQNKTPPDAYSSMAKAQGGP. The span at 258–267 shows a compositional bias: polar residues; the sequence is QRSSSFQNKT. T267 carries the phosphothreonine modification. S362 is subject to Phosphoserine. Disordered stretches follow at residues 378 to 399, 442 to 481, and 501 to 550; these read RAGPSRTNSFNNPQPEPSLPAP, PATESLETKEGSAGPHPLDVDYGGSERRCPPPPYPKHLLL, and QSLR…KRES. Positions 472–475 match the PPxY motif motif; sequence PPPY. A compositionally biased stretch (basic and acidic residues) spans 507–530; sequence TEQDRSDKSHKGAKGDKAGRDKKQ. Position 534 is a phosphoserine (S534). A compositionally biased stretch (basic and acidic residues) spans 541-550; sequence NSRDEEKRES. In terms of domain architecture, Protein kinase spans 626-931; sequence FVKIKTLGIG…ADDLKAHPFF (306 aa). Residues 632-640 and K655 contribute to the ATP site; that span reads LGIGAFGEV. Catalysis depends on D749, which acts as the Proton acceptor. Residues 932–1010 enclose the AGC-kinase C-terminal domain; that stretch reads NTIDFSRDIR…RRFFDDNGYP (79 aa). T999 is modified (phosphothreonine). Residues 1014 to 1042 are disordered; the sequence is PKPSEPAESADPGDADLEGAAEGCQPVYV.

It belongs to the protein kinase superfamily. AGC Ser/Thr protein kinase family. In terms of assembly, interacts with and is phosphorylated by AURKA. Binds to AR. Interacts with AJUBA during mitosis and this complex regulates organization of the spindle apparatus through recruitment of gamma-tubulin to the centrosome. Interacts (via PPxY motif) with YAP1 (via WW domains). Interacts with MOB1A and MOB1B. Interacts with LIMD1, WTIP and AJUBA. Interacts with SNAI1. Interacts with WWC1, WWC2 and WWC3 (via their WW domains). Interacts (via UBA domain) with ubiquitinated AMOTL2; the interaction promotes LATS2 phosphorylation of YAP1. The cofactor is Mg(2+). In terms of processing, autophosphorylated and phosphorylated during M-phase and the G1/S-phase of the cell cycle. Phosphorylated and activated by STK3/MST2. Phosphorylated by MAP4Ks; in parallel to STK3/MST2 and resulting to its activation. Phosphorylation by NUAK2 may regulate its activity in phosphorylation and inactivation YAP1. In terms of tissue distribution, expressed at high levels in ovary and testis and at lower levels in all other tissues examined.

The protein resides in the cytoplasm. The protein localises to the cytoskeleton. It localises to the microtubule organizing center. Its subcellular location is the centrosome. It is found in the spindle pole. The protein resides in the nucleus. The enzyme catalyses L-seryl-[protein] + ATP = O-phospho-L-seryl-[protein] + ADP + H(+). It carries out the reaction L-threonyl-[protein] + ATP = O-phospho-L-threonyl-[protein] + ADP + H(+). Negative regulator of YAP1 in the Hippo signaling pathway that plays a pivotal role in organ size control and tumor suppression by restricting proliferation and promoting apoptosis. The core of this pathway is composed of a kinase cascade wherein STK3/MST2 and STK4/MST1, in complex with its regulatory protein SAV1, phosphorylates and activates LATS1/2 in complex with its regulatory protein MOB1, which in turn phosphorylates and inactivates YAP1 oncoprotein and WWTR1/TAZ. Phosphorylation of YAP1 by LATS2 inhibits its translocation into the nucleus to regulate cellular genes important for cell proliferation, cell death, and cell migration. Also phosphorylates YAP1 in response to cell contact inhibition-driven WWP1 ubiquitination of AMOTL2, which results in LATS2 activation. Acts as a tumor suppressor which plays a critical role in centrosome duplication, maintenance of mitotic fidelity and genomic stability. Negatively regulates G1/S transition by down-regulating cyclin E/CDK2 kinase activity. Negative regulator of the androgen receptor. Phosphorylates SNAI1 in the nucleus leading to its nuclear retention and stabilization, which enhances its epithelial-mesenchymal transition and tumor cell invasion/migration activities. This tumor-promoting activity is independent of its effects upon YAP1 or WWTR1/TAZ. Acts as an activator of the NLRP3 inflammasome by mediating phosphorylation of 'Ser-265' of NLRP3 following NLRP3 palmitoylation, promoting NLRP3 activation by NEK7. The sequence is that of Serine/threonine-protein kinase LATS2 from Mus musculus (Mouse).